Consider the following 163-residue polypeptide: Staphylokinase (163 aa).

An N-terminal signal peptide occupies residues 1–27; that stretch reads MLKRGLLFLTVLLLLFSFSSITNEVSA.

The protein belongs to the staphylokinase family.

The protein resides in the secreted. In terms of biological role, potent plasminogen activator that converts plasminogen into plasmin. It forms a 1:1 complex with plasmin, which in turn activates other plasminogen molecules. The protein is Staphylokinase (sak) of Staphylococcus aureus (strain MRSA252).